The sequence spans 406 residues: NAD(P)H-quinone oxidoreductase subunit H, organellar chromatophore (406 aa).

This sequence belongs to the complex I 49 kDa subunit family. As to quaternary structure, NDH is composed of at least 16 different subunits, 5 of which are encoded in the nucleus.

The protein localises to the plastid. It is found in the organellar chromatophore thylakoid membrane. The enzyme catalyses a quinone + NADH + H(+) = a quinol + NAD(+). Functionally, NDH shuttles electrons from NAD(P)H:plastoquinone, via FMN and iron-sulfur (Fe-S) centers, to quinones in the photosynthetic chain and possibly in a chloroplast respiratory chain. The immediate electron acceptor for the enzyme in this species is believed to be plastoquinone. Couples the redox reaction to proton translocation, and thus conserves the redox energy in a proton gradient. The chain is NAD(P)H-quinone oxidoreductase subunit H, organellar chromatophore from Paulinella chromatophora.